The primary structure comprises 149 residues: MPDASEIPPPPPGAPGTQFLCLTICGYRRPGMSEEDYRHHMTQVSAPMTQDLMVKYGVKRWTMVHNTSETRALMSRLFDHQMTQLADFDCFSQVVFESVEEYRRMKEDAWYQEHLVGDHEKFADTQRSRMTLGWITELIRDGKVVKGTQ.

The 96-residue stretch at 30 to 125 folds into the EthD domain; that stretch reads PGMSEEDYRH…VGDHEKFADT (96 aa).

It belongs to the tpcK family.

The enzyme catalyses atrochrysone carboxylate + H(+) = atrochrysone + CO2. It participates in secondary metabolite biosynthesis. In terms of biological role, decarboxylase; part of the gene cluster that mediates the biosynthesis of agnestins, dihydroxy-xanthone metabolites. The pathway begins with the assembly and cyclization of atrochrysone thioester by the non-reducing polyketide synthase Agnpks1. The atrochrysone carboxyl ACP thioesterase AgnL7 then breaks the thioester bond and releases the atrochrysone carboxylic acid as the first enzyme-free intermediate. The decarboxylase AgnL1 then catalyzes the concerted decarboxylation-elimination required to convert atochrysone carboxylic acid into emodin anthrone, which is further oxidized to emodin by the anthrone oxygenase AgnL2. Emodin then undergoes reduction catalyzed by the oxidoreductase AgnL4 to yield the dihydroquinone tautomer which is the substrate for reduction by the short chain dehydrogenase AgnL6 reduction to produce hydroxyketone, followed by AgnL8 dehydration and likely spontaneous autoxidation to chrysophanol. Baeyer-Villiger oxidation by the oxidase AgnL3 leads to monodictyphenone via cleavage of the C-10/C-10a bond of chrysophanol. Alternative cleavage at the C-4a/C-10 bond of chrysophanol also leads to the formation some cephalone F. Further conversion to agnestins A and B, requires reduction to dihydro-monodictyphenone, oxidation to agnestin C probably via an epoxide, and rearrangement to either agnestin A or agnestin B directly, although agnestin A or agnestin B can also interconvert. Within the cluster, AgnR1 is the only unassigned oxidoreductase present which could be involved in this conversion. However, AgnR1 seems not to be involved in this step, and thus genes involved in the proposed oxidation/reduction may be located elsewhere on the genome. Further agnestin A derivatives are probably formed by spontaneous decarboxylations, dehydrations and methanolysis reactions. The polypeptide is Decarboxylase AgnL1 (Paecilomyces divaricatus (Penicillium divaricatum)).